We begin with the raw amino-acid sequence, 364 residues long: Fructose-1,6-bisphosphatase class 1 2 (364 aa).

Residues Glu-101, Asp-123, Leu-125, and Asp-126 each coordinate Mg(2+). Substrate is bound by residues 126–129 (DGSS) and Asn-218. Glu-290 contributes to the Mg(2+) binding site.

It belongs to the FBPase class 1 family. In terms of assembly, homotetramer. The cofactor is Mg(2+).

The protein localises to the cytoplasm. The catalysed reaction is beta-D-fructose 1,6-bisphosphate + H2O = beta-D-fructose 6-phosphate + phosphate. Its pathway is carbohydrate biosynthesis; gluconeogenesis. This chain is Fructose-1,6-bisphosphatase class 1 2, found in Cupriavidus necator (strain ATCC 17699 / DSM 428 / KCTC 22496 / NCIMB 10442 / H16 / Stanier 337) (Ralstonia eutropha).